The chain runs to 697 residues: Zinc finger protein 12 (697 aa).

K3 participates in a covalent cross-link: Glycyl lysine isopeptide (Lys-Gly) (interchain with G-Cter in SUMO2). Residues 8–79 form the KRAB domain; it reads VSFKDVAVDF…EGEFLLQSYP (72 aa). Residues K98, K179, K182, K209, K215, K224, K239, and K267 each participate in a glycyl lysine isopeptide (Lys-Gly) (interchain with G-Cter in SUMO2) cross-link. 2 C2H2-type zinc fingers span residues 269-291 and 297-319; these read YECSECGKSFCKKSKFIIHQRTH and YECNQCGKSFCQKGTLTVHQRTH. Glycyl lysine isopeptide (Lys-Gly) (interchain with G-Cter in SUMO2) cross-links involve residues K309, K323, K337, and K365. C2H2-type zinc fingers lie at residues 325-347, 353-375, 381-403, 409-431, 437-459, 465-487, 493-515, and 521-543; these read YECNECGKNFYQKLHLIQHQRTH, YECSYCGKSFCQKTHLTQHQRTH, YVCHDCGKTFSQKSALNDHQKIH, YKCSECGKCFCRKSTLTTHLRTH, YECNECGKFFSRLSYLTVHYRTH, YECNECGKTFYLNSALMRHQRVH, YECNECGKLFSQLSYLTIHHRTH, and YECSECGKTFYQNSALCRHRRIH. Residues K544 and K547 each participate in a glycyl lysine isopeptide (Lys-Gly) (interchain with G-Cter in SUMO2) cross-link. C2H2-type zinc fingers lie at residues 549-571, 577-599, 605-627, 633-655, and 661-683; these read YECYICGKFFSQMSYLTIHHRIH, YECSECGKTFCQNSALNRHQRTH, YECYECGKCFSQMSYLTIHHRIH, FECNECGKAFSRMSYLTVHYRTH, and YECTECGKKFYHKSAFNSHQRIH.

Belongs to the krueppel C2H2-type zinc-finger protein family. As to expression, widely expressed in various adult tissues and embryonic developmental stages (isoform 3).

Its subcellular location is the nucleus. In terms of biological role, transcriptional repressor which suppresses activation protein 1 (AP-1)- and serum response element (SRE)-mediated transcriptional activity. This Homo sapiens (Human) protein is Zinc finger protein 12 (ZNF12).